The sequence spans 339 residues: DNA-directed RNA polymerase RPB7 homolog (339 aa).

It belongs to the Asfivirus DNA-directed RNA polymerase RPB7 homolog family. Part of the viral DNA-directed RNA polymerase that consists of 8 polII-like subunits (RPB1, RPB2, RPB3, RPB5, RPB6, RPB7, RPB9, RPB10), a capping enzyme and a termination factor.

It is found in the host cytoplasm. The protein localises to the virion. In terms of biological role, component of the DNA-directed RNA polymerase (RNAP) that catalyzes the transcription in the cytoplasm of viral DNA into RNA using the four ribonucleoside triphosphates as substrates. The protein is DNA-directed RNA polymerase RPB7 homolog of Ornithodoros (relapsing fever ticks).